The primary structure comprises 289 residues: LBH domain-containing protein 1 (289 aa).

Disordered regions lie at residues 1-36 (MALVPGRSKEDGLWTRNSPGSSQHPESPRLPNPLWD) and 205-289 (EGAE…ASQD). The region spanning 1 to 128 (MALVPGRSKE…AEAFFQDQSE (128 aa)) is the LBH domain. Over residues 15–25 (TRNSPGSSQHP) the composition is skewed to polar residues.

In terms of tissue distribution, expressed in bladder cancer tissues (at protein level).

The sequence is that of LBH domain-containing protein 1 from Homo sapiens (Human).